The primary structure comprises 196 residues: ATP-dependent Clp protease proteolytic subunit (196 aa).

Catalysis depends on serine 101, which acts as the Nucleophile. Histidine 126 is an active-site residue.

This sequence belongs to the peptidase S14 family. In terms of assembly, component of the chloroplastic Clp protease core complex.

The protein localises to the plastid. It is found in the chloroplast stroma. It catalyses the reaction Hydrolysis of proteins to small peptides in the presence of ATP and magnesium. alpha-casein is the usual test substrate. In the absence of ATP, only oligopeptides shorter than five residues are hydrolyzed (such as succinyl-Leu-Tyr-|-NHMec, and Leu-Tyr-Leu-|-Tyr-Trp, in which cleavage of the -Tyr-|-Leu- and -Tyr-|-Trp bonds also occurs).. Its function is as follows. Cleaves peptides in various proteins in a process that requires ATP hydrolysis. Has a chymotrypsin-like activity. Plays a major role in the degradation of misfolded proteins. In Eucalyptus globulus subsp. globulus (Tasmanian blue gum), this protein is ATP-dependent Clp protease proteolytic subunit.